The sequence spans 165 residues: 6,7-dimethyl-8-ribityllumazine synthase (165 aa).

5-amino-6-(D-ribitylamino)uracil contacts are provided by residues F22, 56 to 58 (SME), and 80 to 82 (AVI). 85 to 86 (ET) is a (2S)-2-hydroxy-3-oxobutyl phosphate binding site. H88 acts as the Proton donor in catalysis. F113 contacts 5-amino-6-(D-ribitylamino)uracil. A (2S)-2-hydroxy-3-oxobutyl phosphate-binding site is contributed by R127.

The protein belongs to the DMRL synthase family.

It catalyses the reaction (2S)-2-hydroxy-3-oxobutyl phosphate + 5-amino-6-(D-ribitylamino)uracil = 6,7-dimethyl-8-(1-D-ribityl)lumazine + phosphate + 2 H2O + H(+). Its pathway is cofactor biosynthesis; riboflavin biosynthesis; riboflavin from 2-hydroxy-3-oxobutyl phosphate and 5-amino-6-(D-ribitylamino)uracil: step 1/2. Functionally, catalyzes the formation of 6,7-dimethyl-8-ribityllumazine by condensation of 5-amino-6-(D-ribitylamino)uracil with 3,4-dihydroxy-2-butanone 4-phosphate. This is the penultimate step in the biosynthesis of riboflavin. The chain is 6,7-dimethyl-8-ribityllumazine synthase from Thermotoga petrophila (strain ATCC BAA-488 / DSM 13995 / JCM 10881 / RKU-1).